The following is a 331-amino-acid chain: Cytoplasmic envelopment protein 1 (331 aa).

This sequence belongs to the herpesviridae cytoplasmic envelopment protein 1 family. As to quaternary structure, interacts with protein ORF7; this interaction localizes protein ORF53 to the host trans-Golgi network (TGN).

It localises to the virion. The protein resides in the virion tegument. It is found in the host cytoplasm. The protein localises to the host Golgi apparatus. Its function is as follows. Plays a critical role in cytoplasmic virus egress. Participates in the final step of tegumentation and envelope acquisition within the host cytoplasm. The chain is Cytoplasmic envelopment protein 1 (ORF53) from Varicella-zoster virus (strain Dumas) (HHV-3).